The chain runs to 403 residues: Odorant receptor 43b (403 aa).

At 1 to 49 the chain is on the cytoplasmic side; sequence MFGHFKLVYPAPISEPIQSRDSNAYMMETLRNSGLNLKNDFGIGRKIWR. Residues 50 to 70 traverse the membrane as a helical segment; the sequence is VFSFTYNMVILPVSFPINYVI. Residues 71 to 83 are Extracellular-facing; it reads HLAEFPPELLLQS. Residues 84–104 form a helical membrane-spanning segment; that stretch reads LQLCLNTWCFALKFFTLIVYT. The Cytoplasmic portion of the chain corresponds to 105-139; that stretch reads HRLELANKHFDELDKYCVKPAEKRKVRDMVATITR. A helical transmembrane segment spans residues 140–160; that stretch reads LYLTFVVVYVLYATSTLLDGL. The Extracellular portion of the chain corresponds to 161–193; that stretch reads LHHRVPYNTYYPFINWRVDRTQMYIQSFLEYFT. The chain crosses the membrane as a helical span at residues 194 to 214; the sequence is VGYAIYVATATDSYPVIYVAA. Topologically, residues 215–271 are cytoplasmic; that stretch reads LRTHILLLKDRIIYLGDPSNEGSSDPSYMFKSLVDCIKAHRTMLNFCDAIQPIISGT. A helical transmembrane segment spans residues 272-292; that stretch reads IFAQFIICGSILGIIMINMVL. Over 293–299 the chain is Extracellular; the sequence is FADQSTR. A helical membrane pass occupies residues 300–320; the sequence is FGIVIYVMAVLLQTFPLCFYC. Over 321–372 the chain is Cytoplasmic; the sequence is NAIVDDCKELAHALFHSAWWVQDKRYQRTVIQFLQKLQQPMTFTAMNIFNIN. A helical membrane pass occupies residues 373–393; sequence LATNINVAKFAFTVYAIASGM. Residues 394–403 are Extracellular-facing; sequence NLDQKLSIKE.

This sequence belongs to the insect chemoreceptor superfamily. Heteromeric odorant receptor channel (TC 1.A.69) family. Or2a subfamily. In terms of assembly, interacts with Orco. Complexes exist early in the endomembrane system in olfactory sensory neurons (OSNs), coupling these complexes to the conserved ciliary trafficking pathway. In terms of tissue distribution, expressed in 16 olfactory receptor neurons in a broad area across the antenna, including both anterior and posterior faces and in the maxillary palp. This expression pattern matches the distribution of the small sensilla basiconica. Expression in the antenna is observed late in antennal development at 93 hours APF.

Its subcellular location is the cell membrane. In terms of biological role, odorant receptor which mediates acceptance or avoidance behavior, depending on its substrates. The odorant receptor repertoire encodes a large collection of odor stimuli that vary widely in identity, intensity, and duration. May form a complex with Orco to form odorant-sensing units, providing sensitive and prolonged odorant signaling and calcium permeability. This chain is Odorant receptor 43b (Or43b), found in Drosophila melanogaster (Fruit fly).